The primary structure comprises 155 residues: Protein SREK1IP1 (155 aa).

A CCHC-type zinc finger spans residues 13-30 (AGCKKCGYPGHLTFECRN). The disordered stretch occupies residues 44 to 155 (VSSTSSEDSD…TPNSSEFSRK (112 aa)). A Phosphoserine modification is found at serine 52. The segment covering 66–84 (QEKRINEEEEKKKEKSKEK) has biased composition (basic and acidic residues). Basic residues predominate over residues 85–94 (IKLKKKRKRS). Serine 96 and serine 97 each carry phosphoserine. Residues 107-142 (QKKQKYQKKEKKKEKKSKSKKGKHHKKEKKKRKKEK) show a composition bias toward basic residues. Threonine 146 carries the phosphothreonine modification. Residues 146 to 155 (TPNSSEFSRK) are compositionally biased toward polar residues.

As to quaternary structure, interacts with SREK1/SFRS12.

Possible splicing regulator involved in the control of cellular survival. This chain is Protein SREK1IP1 (SREK1IP1), found in Homo sapiens (Human).